The primary structure comprises 475 residues: uncharacterized protein (475 aa).

This is an uncharacterized protein from Schizosaccharomyces pombe (strain 972 / ATCC 24843) (Fission yeast).